Here is a 185-residue protein sequence, read N- to C-terminus: Ribose 1,5-bisphosphate phosphokinase PhnN (185 aa).

10 to 17 (GPSGSGKD) serves as a coordination point for ATP.

The protein belongs to the ribose 1,5-bisphosphokinase family.

The enzyme catalyses alpha-D-ribose 1,5-bisphosphate + ATP = 5-phospho-alpha-D-ribose 1-diphosphate + ADP. Its pathway is metabolic intermediate biosynthesis; 5-phospho-alpha-D-ribose 1-diphosphate biosynthesis; 5-phospho-alpha-D-ribose 1-diphosphate from D-ribose 5-phosphate (route II): step 3/3. Functionally, catalyzes the phosphorylation of ribose 1,5-bisphosphate to 5-phospho-D-ribosyl alpha-1-diphosphate (PRPP). The protein is Ribose 1,5-bisphosphate phosphokinase PhnN of Escherichia coli O157:H7.